Here is a 453-residue protein sequence, read N- to C-terminus: Ribulose bisphosphate carboxylase large chain (453 aa).

A propeptide spanning residues 1–2 is cleaved from the precursor; sequence MS. The residue at position 3 (proline 3) is an N-acetylproline. Lysine 14 bears the N6,N6,N6-trimethyllysine mark. Residues asparagine 123 and threonine 173 each coordinate substrate. Residue lysine 175 is the Proton acceptor of the active site. Lysine 177 is a binding site for substrate. Residues lysine 201, aspartate 203, and glutamate 204 each coordinate Mg(2+). At lysine 201 the chain carries N6-carboxylysine. Residue histidine 294 is the Proton acceptor of the active site. The substrate site is built by arginine 295, histidine 327, and serine 379.

Belongs to the RuBisCO large chain family. Type I subfamily. As to quaternary structure, heterohexadecamer of 8 large chains and 8 small chains; disulfide-linked. The disulfide link is formed within the large subunit homodimers. Mg(2+) is required as a cofactor. Post-translationally, the disulfide bond which can form in the large chain dimeric partners within the hexadecamer appears to be associated with oxidative stress and protein turnover.

Its subcellular location is the plastid. It localises to the chloroplast. The enzyme catalyses 2 (2R)-3-phosphoglycerate + 2 H(+) = D-ribulose 1,5-bisphosphate + CO2 + H2O. It catalyses the reaction D-ribulose 1,5-bisphosphate + O2 = 2-phosphoglycolate + (2R)-3-phosphoglycerate + 2 H(+). Functionally, ruBisCO catalyzes two reactions: the carboxylation of D-ribulose 1,5-bisphosphate, the primary event in carbon dioxide fixation, as well as the oxidative fragmentation of the pentose substrate in the photorespiration process. Both reactions occur simultaneously and in competition at the same active site. In Rubia tinctorum (Madder), this protein is Ribulose bisphosphate carboxylase large chain.